The following is an 876-amino-acid chain: DNA polymerase I (876 aa).

In terms of domain architecture, 5'-3' exonuclease spans 1-310 (MKNKLVLIDG…FAIADSVTDE (310 aa)). Residues 289–876 (TDEGEKPLAG…HYGPTWYDAK (588 aa)) form a subtilisin large fragment region. A polymerase region spans residues 469–876 (EQDRLLTELE…HYGPTWYDAK (408 aa)).

The protein belongs to the DNA polymerase type-A family. As to quaternary structure, single-chain monomer with multiple functions.

It catalyses the reaction DNA(n) + a 2'-deoxyribonucleoside 5'-triphosphate = DNA(n+1) + diphosphate. Its function is as follows. In addition to polymerase activity, the recombinant enzyme has strand displacement and 5'-3' exonuclease activity, but lacks proofreading 3'-5' exonuclease activity. The sequence is that of DNA polymerase I (polA) from Geobacillus stearothermophilus (Bacillus stearothermophilus).